The primary structure comprises 482 residues: Iroquois-class homeodomain protein irx-5 (482 aa).

Positions 109-171 (DPAYRKNATR…NARRRLKKEN (63 aa)) form a DNA-binding region, homeobox. Disordered stretches follow at residues 173–307 (MTWT…HQSH) and 462–482 (QSQA…MSSI). Residues 182–198 (EDEEDDENIDLEKNEED) show a composition bias toward acidic residues. Over residues 199–256 (DPRKLEEKGDQDGDAGDQKRSPSAVDFDRLEGEVRQGKELDQTRSDSEQNEVEERNDL) the composition is skewed to basic and acidic residues. Residues 264–273 (PTSPLCPPDQ) are compositionally biased toward pro residues. The span at 284 to 305 (HRHTVHNHHHQSIQQLHHHSHQ) shows a compositional bias: basic residues. Positions 467-482 (LNKDTPYEMKKGMSSI) are enriched in basic and acidic residues.

The protein belongs to the TALE/IRO homeobox family. As to expression, expressed in the neural plate in overlapping patterns with other irx members, which all share an anterior border of expression. Broadly expressed in the tailbud rhombencephalon (hindbrain). Outside the nervous system and at tailbud stages, expressed in the developing otic vesicle and branchial arches.

The protein resides in the nucleus. Its function is as follows. Acts partially redundantly with other irx members in neural patterning. Required for formation of the posterior forebrain, midbrain, hindbrain, and to a lesser extent, spinal cord. Patterns the neuroectoderm in both the anterior/posterior and dorsal/ventral axes. Does not appear to play a role in pronephros kidney development. Involved in craniofacial and gonadal development. Modulates the migration of progenitor cell populations in branchial arches and gonads by repressing CXCL12. The sequence is that of Iroquois-class homeodomain protein irx-5 from Xenopus tropicalis (Western clawed frog).